Reading from the N-terminus, the 209-residue chain is High frequency lysogenization protein HflD homolog (209 aa).

This sequence belongs to the HflD family.

It is found in the cytoplasm. Its subcellular location is the cell inner membrane. This is High frequency lysogenization protein HflD homolog from Halorhodospira halophila (strain DSM 244 / SL1) (Ectothiorhodospira halophila (strain DSM 244 / SL1)).